We begin with the raw amino-acid sequence, 203 residues long: Thymidylate kinase (203 aa).

An ATP-binding site is contributed by 14 to 21 (GGEGSGKS).

It belongs to the thymidylate kinase family.

The catalysed reaction is dTMP + ATP = dTDP + ADP. In terms of biological role, phosphorylation of dTMP to form dTDP in both de novo and salvage pathways of dTTP synthesis. In Rickettsia canadensis (strain McKiel), this protein is Thymidylate kinase.